The primary structure comprises 595 residues: Adenine deaminase (595 aa).

The protein belongs to the metallo-dependent hydrolases superfamily. Adenine deaminase family. Homodimer. It depends on Mn(2+) as a cofactor.

It carries out the reaction adenine + H2O + H(+) = hypoxanthine + NH4(+). In Serratia proteamaculans (strain 568), this protein is Adenine deaminase.